A 196-amino-acid polypeptide reads, in one-letter code: Ribonuclease HII (196 aa).

The RNase H type-2 domain maps to 4–196; the sequence is IWVCGVDEAG…PVRRVLEGSF (193 aa). 3 residues coordinate a divalent metal cation: Asp10, Glu11, and Asp106.

This sequence belongs to the RNase HII family. Mn(2+) serves as cofactor. The cofactor is Mg(2+).

The protein resides in the cytoplasm. The catalysed reaction is Endonucleolytic cleavage to 5'-phosphomonoester.. Endonuclease that specifically degrades the RNA of RNA-DNA hybrids. In Polynucleobacter asymbioticus (strain DSM 18221 / CIP 109841 / QLW-P1DMWA-1) (Polynucleobacter necessarius subsp. asymbioticus), this protein is Ribonuclease HII.